Consider the following 596-residue polypeptide: Leucine-rich repeat and IQ domain-containing protein 4 (596 aa).

LRR repeat units lie at residues 22 to 44, 59 to 83, 84 to 106, 108 to 129, 130 to 152, 153 to 176, 177 to 200, 202 to 223, 224 to 246, 248 to 269, 270 to 293, 295 to 315, 317 to 337, 338 to 361, 362 to 384, 385 to 407, 410 to 433, 434 to 457, 459 to 479, 480 to 502, 504 to 525, and 527 to 549; these read LPRL…LLRQ, LTDR…ILAL, KELE…IQQL, NTKV…LGAL, SSLE…VVSR, LRTL…ICKS, LHHL…IVNQ, KLRE…LCVL, YNLE…IGHL, RLQK…LSQC, SKLS…ELLT, LTEV…LCSW, SLHL…SFKR, LINL…ICAL, KNLE…ISLL, SNLK…IFSL, LEKL…IKRL, MNLK…GLMP, LEVL…ICRT, RNLR…LDHL, NLKV…VCNQ, and NEAI…TIQA. An IQ domain is found at 540–569; sequence RKMMATTIQAWWRGIMVRKGYGSYEELLKA. Over residues 569 to 587 the composition is skewed to basic residues; sequence ARKKGKSPPKDKKGKKAAK. The disordered stretch occupies residues 569-596; it reads ARKKGKSPPKDKKGKKAAKGKPEKGNKK.

The protein is Leucine-rich repeat and IQ domain-containing protein 4 (Lrriq4) of Mus musculus (Mouse).